The primary structure comprises 272 residues: NH(3)-dependent NAD(+) synthetase (272 aa).

45–52 is a binding site for ATP; it reads GISGGQDS. Asp51 provides a ligand contact to Mg(2+). Deamido-NAD(+) is bound at residue Arg138. Thr158 contacts ATP. Glu163 provides a ligand contact to Mg(2+). Deamido-NAD(+)-binding residues include Lys171 and Asp178. ATP-binding residues include Lys187 and Thr209. 258 to 259 contacts deamido-NAD(+); that stretch reads HK.

Belongs to the NAD synthetase family. As to quaternary structure, homodimer.

The catalysed reaction is deamido-NAD(+) + NH4(+) + ATP = AMP + diphosphate + NAD(+) + H(+). It functions in the pathway cofactor biosynthesis; NAD(+) biosynthesis; NAD(+) from deamido-NAD(+) (ammonia route): step 1/1. Its function is as follows. Catalyzes the ATP-dependent amidation of deamido-NAD to form NAD. Uses ammonia as a nitrogen source. In Bacillus cereus (strain AH187), this protein is NH(3)-dependent NAD(+) synthetase.